The primary structure comprises 175 residues: Photosynthetic NDH subunit of subcomplex B 4, chloroplastic (175 aa).

A chloroplast-targeting transit peptide spans 1-24; it reads MAEAFTSFTFTNLHIPSSYNHSPK. The helical transmembrane segment at 95–111 threads the bilayer; it reads VYMFYIMFTCWGCLYFG.

As to quaternary structure, part of the chloroplast NDH complex, composed of a mixture of chloroplast and nucleus encoded subunits. Component of the NDH subcomplex B, at least composed of PnsB1, PnsB2, PnsB3, PnsB4 and PnsB5.

The protein resides in the plastid. The protein localises to the chloroplast thylakoid membrane. NDH shuttles electrons from NAD(P)H:plastoquinone, via FMN and iron-sulfur (Fe-S) centers, to quinones in the photosynthetic chain and possibly in a chloroplast respiratory chain. The immediate electron acceptor for the enzyme in this species is believed to be plastoquinone. Couples the redox reaction to proton translocation, and thus conserves the redox energy in a proton gradient. This chain is Photosynthetic NDH subunit of subcomplex B 4, chloroplastic, found in Arabidopsis thaliana (Mouse-ear cress).